The sequence spans 145 residues: Immune protein Tsi3 (145 aa).

The N-terminal stretch at 1–15 is a signal peptide; sequence MKTVALILASLALLA. Cys-16 carries N-palmitoyl cysteine lipidation. Cys-16 is lipidated: S-diacylglycerol cysteine. The segment at 53–85 is disordered; the sequence is FDEGGKLRNPRQLEVQRQDAPPPPDLASRRLGD. Glu-126 lines the Ca(2+) pocket.

As to quaternary structure, forms a heterotetramer with Tse3 consisting of two Tse3 dimers and two Tsi3 dimers. Formation of the complex inactivates Tse3 enzymatic activity.

Its function is as follows. Immunity protein that plays a role in preventing early activation of toxin Tse3. Occupies Tse3 substrate binding site and prevents the substrate from entering. The chain is Immune protein Tsi3 from Pseudomonas aeruginosa (strain ATCC 15692 / DSM 22644 / CIP 104116 / JCM 14847 / LMG 12228 / 1C / PRS 101 / PAO1).